The sequence spans 856 residues: DNA mismatch repair protein MutS (856 aa).

618 to 625 (GPNMGGKS) lines the ATP pocket.

This sequence belongs to the DNA mismatch repair MutS family.

In terms of biological role, this protein is involved in the repair of mismatches in DNA. It is possible that it carries out the mismatch recognition step. This protein has a weak ATPase activity. The sequence is that of DNA mismatch repair protein MutS from Shewanella baltica (strain OS195).